The primary structure comprises 466 residues: Glutamate--tRNA ligase (466 aa).

The short motif at 9–19 is the 'HIGH' region element; sequence PSPTGDLHVGS. The short motif at 237-241 is the 'KMSKS' region element; that stretch reads KLSKR. ATP is bound at residue Lys-240.

The protein belongs to the class-I aminoacyl-tRNA synthetase family. Glutamate--tRNA ligase type 1 subfamily. As to quaternary structure, monomer.

The protein resides in the cytoplasm. It carries out the reaction tRNA(Glu) + L-glutamate + ATP = L-glutamyl-tRNA(Glu) + AMP + diphosphate. Functionally, catalyzes the attachment of glutamate to tRNA(Glu) in a two-step reaction: glutamate is first activated by ATP to form Glu-AMP and then transferred to the acceptor end of tRNA(Glu). This chain is Glutamate--tRNA ligase, found in Baumannia cicadellinicola subsp. Homalodisca coagulata.